A 199-amino-acid polypeptide reads, in one-letter code: Inner membrane protein E199L (199 aa).

N-linked (GlcNAc...) asparagine; by host glycosylation occurs at asparagine 131. The helical transmembrane segment at 150–170 (INVMNHPFLTLILIILILVII) threads the bilayer.

This sequence belongs to the asfivirus E199L family. As to quaternary structure, interacts with host PYCR2; this interaction results in autophagy activation. Post-translationally, contains intramolecular disulfide bonds.

It is found in the virion membrane. Its subcellular location is the host membrane. Its function is as follows. Essential for viral fusion with host endosomal membrane and core release. Not required for virus morphogenesis and egress. Induces complete autophagy through the interaction with and down-regulation of host PYCR2. This African swine fever virus (isolate Tick/Malawi/Lil 20-1/1983) (ASFV) protein is Inner membrane protein E199L.